Consider the following 156-residue polypeptide: 6,7-dimethyl-8-ribityllumazine synthase (156 aa).

Residues Phe-23, 57–59 (AFE), and 81–83 (TVI) contribute to the 5-amino-6-(D-ribitylamino)uracil site. Position 86-87 (86-87 (ST)) interacts with (2S)-2-hydroxy-3-oxobutyl phosphate. Catalysis depends on His-89, which acts as the Proton donor. Phe-114 is a 5-amino-6-(D-ribitylamino)uracil binding site. A (2S)-2-hydroxy-3-oxobutyl phosphate-binding site is contributed by Arg-128.

Belongs to the DMRL synthase family. In terms of assembly, forms an icosahedral capsid composed of 60 subunits, arranged as a dodecamer of pentamers.

It catalyses the reaction (2S)-2-hydroxy-3-oxobutyl phosphate + 5-amino-6-(D-ribitylamino)uracil = 6,7-dimethyl-8-(1-D-ribityl)lumazine + phosphate + 2 H2O + H(+). Its pathway is cofactor biosynthesis; riboflavin biosynthesis; riboflavin from 2-hydroxy-3-oxobutyl phosphate and 5-amino-6-(D-ribitylamino)uracil: step 1/2. Catalyzes the formation of 6,7-dimethyl-8-ribityllumazine by condensation of 5-amino-6-(D-ribitylamino)uracil with 3,4-dihydroxy-2-butanone 4-phosphate. This is the penultimate step in the biosynthesis of riboflavin. The polypeptide is 6,7-dimethyl-8-ribityllumazine synthase (Halalkalibacterium halodurans (strain ATCC BAA-125 / DSM 18197 / FERM 7344 / JCM 9153 / C-125) (Bacillus halodurans)).